Reading from the N-terminus, the 137-residue chain is Large ribosomal subunit protein uL16 (137 aa).

This sequence belongs to the universal ribosomal protein uL16 family. In terms of assembly, part of the 50S ribosomal subunit.

Binds 23S rRNA and is also seen to make contacts with the A and possibly P site tRNAs. The chain is Large ribosomal subunit protein uL16 from Wolbachia pipientis subsp. Culex pipiens (strain wPip).